The chain runs to 156 residues: Ribosomal RNA large subunit methyltransferase H (156 aa).

S-adenosyl-L-methionine-binding positions include leucine 73, glycine 104, and 123-128 (LSDLTL).

This sequence belongs to the RNA methyltransferase RlmH family. As to quaternary structure, homodimer.

It localises to the cytoplasm. The catalysed reaction is pseudouridine(1915) in 23S rRNA + S-adenosyl-L-methionine = N(3)-methylpseudouridine(1915) in 23S rRNA + S-adenosyl-L-homocysteine + H(+). Its function is as follows. Specifically methylates the pseudouridine at position 1915 (m3Psi1915) in 23S rRNA. The chain is Ribosomal RNA large subunit methyltransferase H from Leptothrix cholodnii (strain ATCC 51168 / LMG 8142 / SP-6) (Leptothrix discophora (strain SP-6)).